We begin with the raw amino-acid sequence, 495 residues long: Heterogeneous nuclear ribonucleoprotein Q (495 aa).

Residues 1–10 (MSDARDNDDR) show a composition bias toward basic and acidic residues. The segment at 1–101 (MSDARDNDDR…KPPSPIDDED (101 aa)) is disordered. 2 stretches are compositionally biased toward acidic residues: residues 11–46 (VDFE…DDDV) and 67–101 (MEDV…DDED). 3 RRM domains span residues 116–194 (SEVF…LSET), 196–278 (NRLF…WADP), and 292–368 (KALY…LAKP). The tract at residues 452 to 495 (MPMAAAPPQRPRRNDRNNGSSGGSGRDNSHEHDGNRGGRRYRPY) is disordered. The segment covering 478–487 (DNSHEHDGNR) has biased composition (basic and acidic residues).

Interacts with LHP1 in the nucleus on a common set of chromatin regions. As to expression, predominantly expressed in vascular and meristematic tissues. Expressed throughout development in seedlings, roots, leaves, floral buds and siliques.

Its subcellular location is the nucleus. The protein localises to the cytoplasm. The protein resides in the microsome. In terms of biological role, transcriptional activator that binds DNA on GAGA-like motif and 5'-(C/G)ACGTG(G/T)C(A/G)-3' consensus motif in the promoters of target genes. Component of ribonucleosomes, which are complexes of at least 20 other different heterogeneous nuclear ribonucleoproteins (hnRNP). hnRNP play an important role in processing of precursor mRNA in the nucleus. Required during flower development and for cell fate determination. Acts both as an antagonist and as a promoter of polycomb LHP1 gene regulation activity, depending of target genes, to regulate the transcription of stress-responsive and flowering genes. May regulate histone H3 trimethylation on lysine 27 (H3K27me3). Recognizes and binds histone H3 tails methylated at 'Lys-4' (H3K4me) and acetylated at 'Lys-9' (H3K9ac), leading to epigenetic activation. When in complex with LHP1, recognizes and binds histone H3 tails methylated at 'Lys-4' (H3K4me) and 'Lys-27' (H3K27me), mostly corresponding to stress-responsive genes. May function as a suppressor of cell-autonomous immune responses involving glucosinolates, salicylic acid (SA) and jasmonic acid (JA) pathways toward pathogenic bacteria and fungi. The chain is Heterogeneous nuclear ribonucleoprotein Q from Arabidopsis thaliana (Mouse-ear cress).